Reading from the N-terminus, the 2898-residue chain is Papilin (2898 aa).

An N-terminal signal peptide occupies residues 1–26; it reads MDLSRRLCSTALVAFIVLASIHDSQS. The segment at 43-67 is disordered; that stretch reads LPESSVTPGGEGNDPDEWTPWSSPS. Residues 57-111 enclose the TSP type-1 1 domain; sequence PDEWTPWSSPSDCSRTCGGGVSYQTRECLRRDDRGEAVCSGGSRRYFSCNTQDCP. Disulfide bonds link cysteine 69–cysteine 105, cysteine 73–cysteine 110, and cysteine 84–cysteine 95. N-linked (GlcNAc...) asparagine glycosylation is found at asparagine 258 and asparagine 319. A TSP type-1 2 domain is found at 338-397; it reads DTHTWTHHQFNACSASCGGGSQSRKVTCNNRITLAEVNPSLCDQKSKPVEEQACGTEPCA. N-linked (GlcNAc...) asparagine glycosylation occurs at asparagine 419. 4 consecutive TSP type-1 domains span residues 461–521, 522–575, 576–633, and 639–694; these read NCPK…TPCE, GVDW…KSPK, CEAQ…QDCE, and CPGE…EACT. 3 disulfides stabilise this stretch: cysteine 462–cysteine 504, cysteine 473–cysteine 515, and cysteine 477–cysteine 520. Asparagine 669 carries an N-linked (GlcNAc...) asparagine glycan. Disordered regions lie at residues 699 to 1252 and 1323 to 1367; these read LPLT…CAKS and GEND…PDTK. Composition is skewed to acidic residues over residues 708–720 and 727–738; these read IEDD…EDGI and LSDDEKSEDVID. The span at 768 to 788 shows a compositional bias: polar residues; sequence STGTTFEGSGYDSESTTDSGI. Residues 801 to 879 are compositionally biased toward low complexity; that stretch reads EASTDLSSST…ASASESTDVS (79 aa). Asparagine 889, asparagine 914, asparagine 917, asparagine 950, and asparagine 1064 each carry an N-linked (GlcNAc...) asparagine glycan. The segment covering 890-1053 has biased composition (low complexity); that stretch reads ASDSTPESST…SDNTDITTDG (164 aa). Residues 1064–1073 are compositionally biased toward polar residues; it reads NASTEGSTEG. Low complexity-rich tracts occupy residues 1076 to 1091 and 1104 to 1215; these read EDTT…TEST and STVE…IWST. Residues 1237 to 1248 are compositionally biased toward basic residues; the sequence is SKPRKCKPKKST. The segment covering 1330-1351 has biased composition (low complexity); sequence PETTTVPPTTTTEETQPETTTE. Asparagine 1489 and asparagine 1623 each carry an N-linked (GlcNAc...) asparagine glycan. Cystine bridges form between cysteine 1612–cysteine 1662, cysteine 1621–cysteine 1645, cysteine 1637–cysteine 1658, cysteine 1671–cysteine 1721, cysteine 1680–cysteine 1704, cysteine 1696–cysteine 1717, cysteine 1730–cysteine 1780, cysteine 1739–cysteine 1763, cysteine 1755–cysteine 1776, cysteine 1790–cysteine 1840, cysteine 1799–cysteine 1823, cysteine 1815–cysteine 1836, cysteine 1849–cysteine 1899, cysteine 1858–cysteine 1882, and cysteine 1874–cysteine 1895. BPTI/Kunitz inhibitor domains lie at 1612–1662, 1671–1721, 1730–1780, 1790–1840, and 1849–1899; these read CGLP…KDTC, CLLP…QGTC, CEQP…NYNC, CALP…EDHC, and CEIP…LARC. A glycan (N-linked (GlcNAc...) asparagine) is linked at asparagine 1750. The segment at 1902–1928 is disordered; it reads KPEPTTTTPATRPQPSRQDVCDEEPAP. Residues 1905–1916 show a composition bias toward low complexity; sequence PTTTTPATRPQP. 3 disulfide bridges follow: cysteine 1922–cysteine 1972, cysteine 1931–cysteine 1955, and cysteine 1947–cysteine 1968. The region spanning 1922 to 1972 is the BPTI/Kunitz inhibitor 6 domain; it reads CDEEPAPGECSTWVLKWHFDRKIGACRQFYYGNCGGNGNRFETENDCQQRC. The interval 1972-2004 is disordered; it reads CLSQEPPAPTPPRAPAPTRQPDPAPTVAQCSQP. The segment covering 1977–1995 has biased composition (pro residues); it reads PPAPTPPRAPAPTRQPDPA. 18 disulfide bridges follow: cysteine 2001/cysteine 2051, cysteine 2010/cysteine 2034, cysteine 2026/cysteine 2047, cysteine 2071/cysteine 2121, cysteine 2080/cysteine 2104, cysteine 2096/cysteine 2117, cysteine 2128/cysteine 2178, cysteine 2137/cysteine 2161, cysteine 2153/cysteine 2174, cysteine 2194/cysteine 2244, cysteine 2203/cysteine 2227, cysteine 2219/cysteine 2240, cysteine 2253/cysteine 2303, cysteine 2262/cysteine 2286, cysteine 2278/cysteine 2299, cysteine 2318/cysteine 2371, cysteine 2327/cysteine 2354, and cysteine 2346/cysteine 2367. BPTI/Kunitz inhibitor domains follow at residues 2001 to 2051, 2071 to 2121, 2128 to 2178, 2194 to 2244, 2253 to 2303, and 2318 to 2371; these read CSQP…SARC, CFLA…QNEC, CALP…LNFC, CAEP…ERQC, CNEP…QTVC, and CLLP…TNQC. Asparagine 2020 carries N-linked (GlcNAc...) asparagine glycosylation. Asparagine 2083 carries N-linked (GlcNAc...) asparagine glycosylation. An N-linked (GlcNAc...) asparagine glycan is attached at asparagine 2205. The 47-residue stretch at 2452–2498 folds into the WAP domain; that stretch reads DIYKPGECPALSANASGCARECYTDADCRGDNKCCSDGCGQLCVHPA. Asparagine 2465, asparagine 2552, and asparagine 2625 each carry an N-linked (GlcNAc...) asparagine glycan. 3 consecutive Ig-like C2-type domains span residues 2523–2607, 2617–2697, and 2749–2840; these read PKEA…REVA, PAYI…RPVS, and PTVN…ANVS. A disulfide bond links cysteine 2543 and cysteine 2592. Disulfide bonds link cysteine 2640–cysteine 2687 and cysteine 2775–cysteine 2824. N-linked (GlcNAc...) asparagine glycosylation is found at asparagine 2784 and asparagine 2838. Residues 2847–2886 enclose the PLAC domain; the sequence is VSPECVDNPYFANCKLIVKGRYCSNPYYTQFCCRSCTLAG.

This sequence belongs to the papilin family. As to quaternary structure, homooligomer; disulfide-linked. Post-translationally, N-glycosylated. Sulfated. During embryogenesis it first appears in the extracellular matrix during gastrulation and early mesoderm development at sites where basement membranes do not subsequently form. Later, migrating hemocytes prominently produce it together with other ECM components, in basement membranes that underlie epithelia and envelop muscles and emerging organs. At various life stages, it can be synthesized by other cells, such as those of the fat body, and it also occurs in a few, circumscribed regions of relatively amorphous ECM. Isoform E is specifically expressed in ECM of heart and proventriculus. Isoform C is a major component of transitory ECM deposit in the early embryo. Isoform F is a major component of the basement membrane during embryogenesis.

It localises to the secreted. It is found in the extracellular space. The protein resides in the extracellular matrix. Its subcellular location is the basement membrane. In terms of biological role, essential extracellular matrix (ECM) protein that influences cell rearrangements. May act by modulating metalloproteinases action during organogenesis. Able to non-competitively inhibit procollagen N-proteinase, an ADAMTS metalloproteinase. The polypeptide is Papilin (Ppn) (Drosophila melanogaster (Fruit fly)).